Consider the following 308-residue polypeptide: NADH-cytochrome b5 reductase 1 (308 aa).

The helical transmembrane segment at 10–27 (INGVYIPSALLIFGTTII) threads the bilayer. One can recognise an FAD-binding FR-type domain in the interval 59-164 (TEFQNFVLKD…RGPKGAMVYT (106 aa)). FAD is bound by residues 144 to 159 (TTLR…GPKG) and 170 to 207 (HIGM…QIDL).

Belongs to the flavoprotein pyridine nucleotide cytochrome reductase family. As to quaternary structure, monomer. Component of the 2-(3-amino-3-carboxypropyl)histidine synthase complex composed of DPH1, DPH2, DPH3 and a NADH-dependent reductase, predominantly CBR1. It depends on FAD as a cofactor.

The protein localises to the mitochondrion outer membrane. The catalysed reaction is 2 Fe(III)-[cytochrome b5] + NADH = 2 Fe(II)-[cytochrome b5] + NAD(+) + H(+). It catalyses the reaction 2 Fe(3+)-[Dph3] + NADH = 2 Fe(2+)-[Dph3] + NAD(+) + H(+). The protein operates within protein modification; peptidyl-diphthamide biosynthesis. Functionally, NADH-dependent reductase for DPH3 and cytochrome b5. Required for the first step of diphthamide biosynthesis, a post-translational modification of histidine which occurs in elongation factor 2. DPH1 and DPH2 transfer a 3-amino-3-carboxypropyl (ACP) group from S-adenosyl-L-methionine (SAM) to a histidine residue, the reaction is assisted by a reduction system comprising DPH3 and a NADH-dependent reductase, predominantly CBR1. By reducing DPH3, also involved in the formation of the tRNA wobble base modification mcm5s 2U (5-methoxycarbonylmethyl-2-thiouridine), mediated by the elongator complex. The cytochrome b5/NADH cytochrome b5 reductase electron transfer system supports the catalytic activity of several sterol biosynthetic enzymes. This Coccidioides immitis (strain RS) (Valley fever fungus) protein is NADH-cytochrome b5 reductase 1 (CBR1).